The chain runs to 115 residues: Cytochrome c (115 aa).

Heme c is bound by residues cysteine 26, cysteine 29, histidine 30, and methionine 91.

This sequence belongs to the cytochrome c family. Post-translationally, binds 1 heme c group covalently per subunit.

Its subcellular location is the mitochondrion intermembrane space. Electron carrier protein. The oxidized form of the cytochrome c heme group can accept an electron from the heme group of the cytochrome c1 subunit of cytochrome reductase. Cytochrome c then transfers this electron to the cytochrome oxidase complex, the final protein carrier in the mitochondrial electron-transport chain. This is Cytochrome c from Theileria parva (East coast fever infection agent).